The sequence spans 369 residues: Leucine-specific-binding protein (369 aa).

The first 23 residues, 1–23 (MKRKAKTIIAGIVALAVSQGAMA), serve as a signal peptide directing secretion. Cys-76 and Cys-101 are oxidised to a cystine.

It belongs to the leucine-binding protein family.

The protein localises to the periplasm. In terms of biological role, this protein is a component of the leucine-specific transport system, which is one of the two periplasmic binding protein-dependent transport systems of the high-affinity transport of the branched-chain amino acids. The protein is Leucine-specific-binding protein (livK) of Salmonella typhi.